The following is an 852-amino-acid chain: Zinc finger protein 484 (852 aa).

A KRAB domain is found at 8–78 (VSFKDVTVDF…DGEIPSQSRP (71 aa)). A Glycyl lysine isopeptide (Lys-Gly) (interchain with G-Cter in SUMO2) cross-link involves residue Lys156. The C2H2-type 1; degenerate zinc-finger motif lies at 223–245 (CECNQCGKPLHHKQALIQQQKIH). Residues 279-301 (HECHECEAVFTQKSQLDGSQRVY) form a C2H2-type 2; degenerate zinc finger. Residues 328–350 (YKCSDYGRAFIQKSDLFRCQRIH) form a C2H2-type 3; degenerate zinc finger. The segment at 356 to 378 (YEYSECEKNLPQNSNLNIHKKIH) adopts a C2H2-type 4; degenerate zinc-finger fold. 15 C2H2-type zinc fingers span residues 384-406 (FECT…QKIH), 412-434 (YVCT…ERIH), 440-462 (YECS…QRIH), 468-490 (FICS…QKIH), 496-518 (YICT…QKIH), 524-546 (YKCS…QKCH), 552-574 (YECS…QRIH), 580-602 (YVCT…ERIH), 608-630 (YECS…QQIH), 636-658 (YRCA…QKIH), 664-686 (YKCS…QQSH), 692-714 (YECS…QRIH), 720-742 (YICN…RRIH), 748-770 (YECS…HRIH), and 776-798 (YICA…QKIH). Residue Lys816 forms a Glycyl lysine isopeptide (Lys-Gly) (interchain with G-Cter in SUMO2) linkage.

The protein belongs to the krueppel C2H2-type zinc-finger protein family.

Its subcellular location is the nucleus. May be involved in transcriptional regulation. This Homo sapiens (Human) protein is Zinc finger protein 484 (ZNF484).